Here is a 525-residue protein sequence, read N- to C-terminus: MATLLRSKLSNVATSVSNKSQAKVSGMFARMGFQAATDEEAVGFAHCDDLDFEHRQGLQMDILKAEGEPCGDEGAEPPVEGDIHYQRGSGAPLPPSGSKDQVGAGGEFGGHDKPKITAWEAGWNVTNAIQGMFVLGLPYAILHGGYLGLFLIIFAAVVCCYTGKILIACLYEENEDGEVVRVRDSYVAIANACCAPRFPTLGGRVVNVAQIIELVMTCILYVVVSGNLMYNSFPGLPVSQKSWSIIATAVLLPCAFLKNLKAVSKFSLLCTLAHFVINILVIAYCLSRARDWAWEKVKFYIDVKKFPISIGIIVFSYTSQIFLPSLEGNMQQPSEFHCMMNWTHIAACVLKGLFALVAYLTWADETKEVITDNLPGSIRAVVNIFLVAKALLSYPLPFFAAVEVLEKSLFQEGSRAFFPACYGGDGRLKSWGLTLRCALVVFTLLMAIYVPHFALLMGLTGSLTGAGLCFLLPSLFHLRLLWRKLLWHQVFFDVAIFVIGGICSVSGFVHSLEGLIEAYRTNAED.

Topologically, residues 1–132 (MATLLRSKLS…WNVTNAIQGM (132 aa)) are cytoplasmic. The segment at 69–111 (PCGDEGAEPPVEGDIHYQRGSGAPLPPSGSKDQVGAGGEFGGH) is disordered. Residues 133–153 (FVLGLPYAILHGGYLGLFLII) form a helical membrane-spanning segment. Topologically, residues 154–204 (FAAVVCCYTGKILIACLYEENEDGEVVRVRDSYVAIANACCAPRFPTLGGR) are lumenal, vesicle. Residue Tyr186 is modified to 3'-nitrotyrosine. The chain crosses the membrane as a helical span at residues 205–225 (VVNVAQIIELVMTCILYVVVS). The Cytoplasmic segment spans residues 226 to 265 (GNLMYNSFPGLPVSQKSWSIIATAVLLPCAFLKNLKAVSK). The helical transmembrane segment at 266-286 (FSLLCTLAHFVINILVIAYCL) threads the bilayer. At 287 to 305 (SRARDWAWEKVKFYIDVKK) the chain is on the lumenal, vesicle side. The chain crosses the membrane as a helical span at residues 306 to 326 (FPISIGIIVFSYTSQIFLPSL). Over 327 to 341 (EGNMQQPSEFHCMMN) the chain is Cytoplasmic. The chain crosses the membrane as a helical span at residues 342–362 (WTHIAACVLKGLFALVAYLTW). Topologically, residues 363 to 383 (ADETKEVITDNLPGSIRAVVN) are lumenal, vesicle. A helical membrane pass occupies residues 384–404 (IFLVAKALLSYPLPFFAAVEV). Residues 405–438 (LEKSLFQEGSRAFFPACYGGDGRLKSWGLTLRCA) are Cytoplasmic-facing. A helical transmembrane segment spans residues 439–459 (LVVFTLLMAIYVPHFALLMGL). Over 460-461 (TG) the chain is Lumenal, vesicle. Residues 462–482 (SLTGAGLCFLLPSLFHLRLLW) form a helical membrane-spanning segment. The Cytoplasmic segment spans residues 483 to 489 (RKLLWHQ). Residues 490–510 (VFFDVAIFVIGGICSVSGFVH) form a helical membrane-spanning segment. Residues 511–525 (SLEGLIEAYRTNAED) lie on the Lumenal, vesicle side of the membrane.

This sequence belongs to the amino acid/polyamine transporter 2 family.

It localises to the cytoplasmic vesicle membrane. Its subcellular location is the presynapse. The catalysed reaction is 4-aminobutanoate(out) + n H(+)(in) = 4-aminobutanoate(in) + n H(+)(out). It carries out the reaction glycine(out) + n H(+)(in) = glycine(in) + n H(+)(out). The enzyme catalyses beta-alanine(out) + n H(+)(in) = beta-alanine(in) + n H(+)(out). Its function is as follows. Antiporter that exchanges vesicular protons for cytosolic 4-aminobutanoate or to a lesser extend glycine, thus allowing their secretion from nerve terminals. The transport is equally dependent on the chemical and electrical components of the proton gradient. May also transport beta-alanine. Acidification of GABAergic synaptic vesicles is a prerequisite for 4-aminobutanoate uptake. This chain is Vesicular inhibitory amino acid transporter, found in Macaca fascicularis (Crab-eating macaque).